Consider the following 400-residue polypeptide: Coenzyme A biosynthesis bifunctional protein CoaBC (400 aa).

The segment at 1–190 (MKLNGKHIVV…SQKQDLQGLN (190 aa)) is phosphopantothenoylcysteine decarboxylase. C158 acts as the Proton donor in catalysis. Positions 191 to 400 (VSITAGPTRE…EIIERYQKTL (210 aa)) are phosphopantothenate--cysteine ligase. Residues 273–275 (GCA), D279, K289, 305–308 (PDII), F324, K338, and K342 contribute to the CTP site.

In the N-terminal section; belongs to the HFCD (homo-oligomeric flavin containing Cys decarboxylase) superfamily. The protein in the C-terminal section; belongs to the PPC synthetase family. Requires Mg(2+) as cofactor. FMN serves as cofactor.

It carries out the reaction N-[(R)-4-phosphopantothenoyl]-L-cysteine + H(+) = (R)-4'-phosphopantetheine + CO2. It catalyses the reaction (R)-4'-phosphopantothenate + L-cysteine + CTP = N-[(R)-4-phosphopantothenoyl]-L-cysteine + CMP + diphosphate + H(+). It functions in the pathway cofactor biosynthesis; coenzyme A biosynthesis; CoA from (R)-pantothenate: step 2/5. The protein operates within cofactor biosynthesis; coenzyme A biosynthesis; CoA from (R)-pantothenate: step 3/5. Its function is as follows. Catalyzes two sequential steps in the biosynthesis of coenzyme A. In the first step cysteine is conjugated to 4'-phosphopantothenate to form 4-phosphopantothenoylcysteine. In the second step the latter compound is decarboxylated to form 4'-phosphopantotheine. This is Coenzyme A biosynthesis bifunctional protein CoaBC from Haemophilus influenzae (strain ATCC 51907 / DSM 11121 / KW20 / Rd).